The chain runs to 421 residues: MTDLSTPDLPRMSAAIAEPTSHDPDSGGHFGGPSGWGGRYVPEALMAVIEEVTAAYQKERVSQDFLDDLDRLQANYAGRPSPLYEATRLSQHAGSARIFLKREDLNHTGSHKINNVLGQALLARRMGKTRVIAETGAGQHGVATATACALLGLDCVIYMGGIDTARQALNVARMRLLGAEVVAVQTGSKTLKDAINEAFRDWVANADNTYYCFGTAAGPHPFPTMVRDFQRIIGMEARVQIQGQAGRLPDAVVACVGGGSNAIGIFHAFLDDPGVRLVGFEAAGDGVETGRHAATFTAGSPGAFHGSFSYLLQDEDGQTIESHSISAGLDYPGVGPEHAWLKEAGRVDYRPITDSEAMDAFGLLCRMEGIIPAIESAHAVAGALKLGVELGRGAVIVVNLSGRGDKDVETAAKWFGLLGND.

K112 carries the post-translational modification N6-(pyridoxal phosphate)lysine.

It belongs to the TrpB family. As to quaternary structure, tetramer of two alpha and two beta chains. Requires pyridoxal 5'-phosphate as cofactor.

The enzyme catalyses (1S,2R)-1-C-(indol-3-yl)glycerol 3-phosphate + L-serine = D-glyceraldehyde 3-phosphate + L-tryptophan + H2O. It participates in amino-acid biosynthesis; L-tryptophan biosynthesis; L-tryptophan from chorismate: step 5/5. Its function is as follows. The beta subunit is responsible for the synthesis of L-tryptophan from indole and L-serine. This Mycobacterium bovis (strain ATCC BAA-935 / AF2122/97) protein is Tryptophan synthase beta chain (trpB).